Consider the following 680-residue polypeptide: UvrABC system protein C (680 aa).

One can recognise a GIY-YIG domain in the interval 66 to 144 (NSPGVYRMFN…IKRLRPRFNV (79 aa)). The UVR domain maps to 254-289 (QKVKSHMAEAMNQAAEDLDFERAAIYRDRLAALSHV).

The protein belongs to the UvrC family. As to quaternary structure, interacts with UvrB in an incision complex.

The protein resides in the cytoplasm. The UvrABC repair system catalyzes the recognition and processing of DNA lesions. UvrC both incises the 5' and 3' sides of the lesion. The N-terminal half is responsible for the 3' incision and the C-terminal half is responsible for the 5' incision. This is UvrABC system protein C from Rhizobium johnstonii (strain DSM 114642 / LMG 32736 / 3841) (Rhizobium leguminosarum bv. viciae).